A 329-amino-acid chain; its full sequence is N-acetylmuramoyl-L-alanine amidase sle1 (329 aa).

Positions 1-26 are cleaved as a signal peptide; that stretch reads MNKKILATAVLGTGALSTLFAHQAEA. LysM domains follow at residues 28-71, 88-131, and 152-195; these read TTHT…VLKV, STYT…QLKV, and STYT…KLRV. The region spanning 205–329 is the Peptidase C51 domain; that stretch reads STRSAQSTYY…YQVRNYKFIH (125 aa).

Its subcellular location is the secreted. It localises to the cell surface. The enzyme catalyses Hydrolyzes the link between N-acetylmuramoyl residues and L-amino acid residues in certain cell-wall glycopeptides.. In terms of biological role, peptidoglycan hydrolase involved in the splitting of the septum during cell division. This Staphylococcus haemolyticus (strain JCSC1435) protein is N-acetylmuramoyl-L-alanine amidase sle1 (sle1).